The sequence spans 160 residues: Phosphopantetheine adenylyltransferase (160 aa).

Ser9 serves as a coordination point for substrate. ATP contacts are provided by residues 9–10 (SF) and His17. Lys41, Leu73, and Lys87 together coordinate substrate. ATP contacts are provided by residues 88-90 (GLR), Glu98, and 123-129 (YSYLSSS).

It belongs to the bacterial CoaD family. As to quaternary structure, homohexamer. Requires Mg(2+) as cofactor.

The protein localises to the cytoplasm. The catalysed reaction is (R)-4'-phosphopantetheine + ATP + H(+) = 3'-dephospho-CoA + diphosphate. It participates in cofactor biosynthesis; coenzyme A biosynthesis; CoA from (R)-pantothenate: step 4/5. Reversibly transfers an adenylyl group from ATP to 4'-phosphopantetheine, yielding dephospho-CoA (dPCoA) and pyrophosphate. The chain is Phosphopantetheine adenylyltransferase from Clostridium tetani (strain Massachusetts / E88).